The following is a 441-amino-acid chain: GPI mannosyltransferase 2 (441 aa).

10 helical membrane-spanning segments follow: residues 4 to 24 (MTVL…LILV), 35 to 55 (ILFG…PGLG), 115 to 135 (LLAL…IFGG), 143 to 163 (LCFL…LSAP), 165 to 185 (GEAL…SSVL), 199 to 223 (LLAA…GVLF), 249 to 269 (VIVL…YIAF), 306 to 326 (YWVV…ALLL), 361 to 381 (LAII…VQII), and 418 to 438 (VAVQ…GSFL).

It belongs to the PIGV family.

The protein resides in the endoplasmic reticulum membrane. The protein operates within glycolipid biosynthesis; glycosylphosphatidylinositol-anchor biosynthesis. Functionally, mannosyltransferase involved in glycosylphosphatidylinositol-anchor biosynthesis. Transfers the second mannose to the glycosylphosphatidylinositol during GPI precursor assembly. This is GPI mannosyltransferase 2 (gpi18) from Aspergillus fumigatus (strain ATCC MYA-4609 / CBS 101355 / FGSC A1100 / Af293) (Neosartorya fumigata).